The primary structure comprises 439 residues: MSGGVIVVGAGLAGAEASWQLVRRGVPVVLYEMRPRKCTPAHKTGDFAELVCSNSLRAEALTNAVGLLKEEMRRLGSLIMACADAHRVPAGGALAVDRQLFAAAVTERLTSHRLVTVCREEITTIPTAELVILATGPLTSDALADELRRLTGQEHLYFFDAVAPIVTLESIDQDRVFRSSRYGRGDPAYLNCPMSREEYERFWEALVAAERATRHTFERETHFEGCLPVEVIAARGRETLLYGPLKPVGLVDPRTGERPYAVVQLRQDNRAGTLYNLVGFQTNLKWGEQRRVFSMIPGLEQAEFVRYGVMHRNTYINAPVLLSPNLMLKSRPGLFIAGQLSGVEGYVESAAAGLVAGLNAARLYKGLEPLVFPPETAHGALINYIVTADPANFQPMNVNFGLFPPLPGKRVRRRPERNLAHAQRALERLAAWLTEKGEG.

FAD is bound at residue 9-14 (GAGLAG).

Belongs to the MnmG family. TrmFO subfamily. It depends on FAD as a cofactor.

It localises to the cytoplasm. The enzyme catalyses uridine(54) in tRNA + (6R)-5,10-methylene-5,6,7,8-tetrahydrofolate + NADH + H(+) = 5-methyluridine(54) in tRNA + (6S)-5,6,7,8-tetrahydrofolate + NAD(+). It carries out the reaction uridine(54) in tRNA + (6R)-5,10-methylene-5,6,7,8-tetrahydrofolate + NADPH + H(+) = 5-methyluridine(54) in tRNA + (6S)-5,6,7,8-tetrahydrofolate + NADP(+). Catalyzes the folate-dependent formation of 5-methyl-uridine at position 54 (M-5-U54) in all tRNAs. The protein is Methylenetetrahydrofolate--tRNA-(uracil-5-)-methyltransferase TrmFO of Desulforudis audaxviator (strain MP104C).